A 329-amino-acid chain; its full sequence is GTP 3',8-cyclase (329 aa).

Residues alanine 8–alanine 234 form the Radical SAM core domain. A GTP-binding site is contributed by arginine 17. [4Fe-4S] cluster-binding residues include cysteine 24 and cysteine 28. Tyrosine 30 is a binding site for S-adenosyl-L-methionine. Residue cysteine 31 coordinates [4Fe-4S] cluster. Arginine 68 is a GTP binding site. Glycine 72 provides a ligand contact to S-adenosyl-L-methionine. A GTP-binding site is contributed by threonine 99. Serine 123 contributes to the S-adenosyl-L-methionine binding site. Lysine 160 provides a ligand contact to GTP. Methionine 194 is a binding site for S-adenosyl-L-methionine. Cysteine 257 and cysteine 260 together coordinate [4Fe-4S] cluster. Residue arginine 262–arginine 264 coordinates GTP. A [4Fe-4S] cluster-binding site is contributed by cysteine 274.

The protein belongs to the radical SAM superfamily. MoaA family. Monomer and homodimer. [4Fe-4S] cluster is required as a cofactor.

The enzyme catalyses GTP + AH2 + S-adenosyl-L-methionine = (8S)-3',8-cyclo-7,8-dihydroguanosine 5'-triphosphate + 5'-deoxyadenosine + L-methionine + A + H(+). It functions in the pathway cofactor biosynthesis; molybdopterin biosynthesis. Functionally, catalyzes the cyclization of GTP to (8S)-3',8-cyclo-7,8-dihydroguanosine 5'-triphosphate. The protein is GTP 3',8-cyclase of Salmonella dublin (strain CT_02021853).